The chain runs to 347 residues: GMP reductase (347 aa).

108 to 131 (ADFEKTVQILALNPALNFVCIDVA) contributes to the NADP(+) binding site. Positions 181 and 183 each coordinate K(+). Cys-186 functions as the Thioimidate intermediate in the catalytic mechanism. Position 216–239 (216–239 (IVSDGGCTMPGDVAKAFGGGADFV)) interacts with NADP(+).

The protein belongs to the IMPDH/GMPR family. GuaC type 1 subfamily. As to quaternary structure, homotetramer.

The catalysed reaction is IMP + NH4(+) + NADP(+) = GMP + NADPH + 2 H(+). Catalyzes the irreversible NADPH-dependent deamination of GMP to IMP. It functions in the conversion of nucleobase, nucleoside and nucleotide derivatives of G to A nucleotides, and in maintaining the intracellular balance of A and G nucleotides. This is GMP reductase from Salmonella choleraesuis (strain SC-B67).